We begin with the raw amino-acid sequence, 227 residues long: Prolactin-4A1 (227 aa).

The first 31 residues, 1 to 31 (MHLSLTPQWSSWTVLLLLVSNLLLWENTASA), serve as a signal peptide directing secretion. 2 disulfides stabilise this stretch: cysteine 87–cysteine 203 and cysteine 220–cysteine 227. Asparagine 175 carries an N-linked (GlcNAc...) asparagine glycan.

It belongs to the somatotropin/prolactin family. As to expression, expressed specifically in placenta. Expressed in both trophoblast giant cells and spongiotrophoblast cells.

The protein localises to the secreted. This chain is Prolactin-4A1 (Prl4a1), found in Mus musculus (Mouse).